Reading from the N-terminus, the 184-residue chain is Acireductone dioxygenase (184 aa).

Residues His97, His99, Glu103, and His141 each contribute to the Fe(2+) site. His97, His99, Glu103, and His141 together coordinate Ni(2+).

It belongs to the acireductone dioxygenase (ARD) family. As to quaternary structure, monomer. It depends on Fe(2+) as a cofactor. Requires Ni(2+) as cofactor.

The enzyme catalyses 1,2-dihydroxy-5-(methylsulfanyl)pent-1-en-3-one + O2 = 3-(methylsulfanyl)propanoate + CO + formate + 2 H(+). The catalysed reaction is 1,2-dihydroxy-5-(methylsulfanyl)pent-1-en-3-one + O2 = 4-methylsulfanyl-2-oxobutanoate + formate + 2 H(+). It participates in amino-acid biosynthesis; L-methionine biosynthesis via salvage pathway; L-methionine from S-methyl-5-thio-alpha-D-ribose 1-phosphate: step 5/6. In terms of biological role, catalyzes 2 different reactions between oxygen and the acireductone 1,2-dihydroxy-3-keto-5-methylthiopentene (DHK-MTPene) depending upon the metal bound in the active site. Fe-containing acireductone dioxygenase (Fe-ARD) produces formate and 2-keto-4-methylthiobutyrate (KMTB), the alpha-ketoacid precursor of methionine in the methionine recycle pathway. Ni-containing acireductone dioxygenase (Ni-ARD) produces methylthiopropionate, carbon monoxide and formate, and does not lie on the methionine recycle pathway. In Parvibaculum lavamentivorans (strain DS-1 / DSM 13023 / NCIMB 13966), this protein is Acireductone dioxygenase.